Consider the following 348-residue polypeptide: A-kinase anchor protein 7 isoform gamma (348 aa).

The interval 1–25 (MERPEAGGINSNECENVSRKKKMSE) is disordered. AMP is bound by residues threonine 129 and 219–221 (HLT). CMP contacts are provided by residues threonine 129 and 219–221 (HLT). The interval 294-348 (AELVRLSKRLVENAVLKAVQQYLEETQNKNKPGEGSSVKTEAADQNGNDNENNRK) is PKA-RII-alpha subunit binding domain. The tract at residues 295-319 (ELVRLSKRLVENAVLKAVQQYLEET) is RI-alpha-binding. The RII-binding stretch occupies residues 296-309 (LVRLSKRLVENAVL). Residues 316–348 (LEETQNKNKPGEGSSVKTEAADQNGNDNENNRK) form a disordered region. Residues 330-348 (SVKTEAADQNGNDNENNRK) show a composition bias toward polar residues.

In terms of assembly, binds cAMP-dependent protein kinase (PKA). Interacts with PRKCA; only the cytoplasmic form is capable of interacting with PRKCA. Expressed in brain, heart, lung, pancreas and placenta.

Its subcellular location is the nucleus. It is found in the cytoplasm. Probably targets cAMP-dependent protein kinase (PKA) to the cellular membrane or cytoskeletal structures. The membrane-associated form reduces epithelial sodium channel (ENaC) activity, whereas the free cytoplasmic form may negatively regulate ENaC channel feedback inhibition by intracellular sodium. The polypeptide is A-kinase anchor protein 7 isoform gamma (AKAP7) (Homo sapiens (Human)).